We begin with the raw amino-acid sequence, 344 residues long: Glyceraldehyde-3-phosphate dehydrogenase (344 aa).

Residues 11-12 and Gly-110 contribute to the NAD(+) site; that span reads TI. 139-141 contributes to the D-glyceraldehyde 3-phosphate binding site; the sequence is SCN. Cys-140 (nucleophile) is an active-site residue. Arg-169 contributes to the NAD(+) binding site. Residue 195–196 coordinates D-glyceraldehyde 3-phosphate; it reads HG. Position 302 (Gln-302) interacts with NAD(+).

This sequence belongs to the glyceraldehyde-3-phosphate dehydrogenase family. In terms of assembly, homotetramer.

It localises to the cytoplasm. The catalysed reaction is D-glyceraldehyde 3-phosphate + phosphate + NADP(+) = (2R)-3-phospho-glyceroyl phosphate + NADPH + H(+). It catalyses the reaction D-glyceraldehyde 3-phosphate + phosphate + NAD(+) = (2R)-3-phospho-glyceroyl phosphate + NADH + H(+). The protein operates within carbohydrate degradation; glycolysis; pyruvate from D-glyceraldehyde 3-phosphate: step 1/5. The protein is Glyceraldehyde-3-phosphate dehydrogenase of Pyrobaculum calidifontis (strain DSM 21063 / JCM 11548 / VA1).